The following is a 215-amino-acid chain: UPF0056 membrane protein bbp_248 (215 aa).

A run of 6 helical transmembrane segments spans residues 10–32, 52–74, 78–100, 119–141, 151–169, and 190–207; these read IYIS…PIFT, FSVA…LFGI, SFRI…GNFI, ISIV…TIVW, IFGC…WTLF, and IMGL…LAGL.

Belongs to the UPF0056 (MarC) family.

The protein resides in the cell membrane. In Buchnera aphidicola subsp. Baizongia pistaciae (strain Bp), this protein is UPF0056 membrane protein bbp_248.